The sequence spans 625 residues: Endoglucanase 13 (625 aa).

Residues 1–34 (MAATMNKTPATTFLLIPAAASLVLLLAAAASVEA) form the signal peptide. Aspartate 91 (nucleophile) is an active-site residue. Histidine 427 is an active-site residue. Residue asparagine 440 is glycosylated (N-linked (GlcNAc...) asparagine). Catalysis depends on residues aspartate 479 and glutamate 488. Positions 509 to 530 (ADNTPEYTPAPNAPSPSNGGSP) are disordered.

This sequence belongs to the glycosyl hydrolase 9 (cellulase E) family.

The protein localises to the secreted. The enzyme catalyses Endohydrolysis of (1-&gt;4)-beta-D-glucosidic linkages in cellulose, lichenin and cereal beta-D-glucans.. The protein is Endoglucanase 13 (GLU6) of Oryza sativa subsp. indica (Rice).